A 173-amino-acid chain; its full sequence is Protein tyrosine phosphatase type IVA 1 (173 aa).

The region spanning 8 to 161 (APVEVTYKNM…YRPKMRLRFK (154 aa)) is the Tyrosine-protein phosphatase domain. A disulfide bridge links cysteine 49 with cysteine 104. Aspartate 72 acts as the Proton donor in catalysis. The tract at residues 97–132 (GCCIAVHCVAGLGRAPVLVALALIEGGMKYEDAVQF) is interaction with ATF5. Cysteine 104 functions as the Phosphocysteine intermediate in the catalytic mechanism. A phosphate-binding site is contributed by 105–110 (VAGLGR). Residue arginine 110 coordinates substrate. The residue at position 170 (cysteine 170) is a Cysteine methyl ester. Cysteine 170 carries the S-farnesyl cysteine lipid modification. Residues 171–173 (CIQ) constitute a propeptide, removed in mature form.

Belongs to the protein-tyrosine phosphatase family. As to quaternary structure, homotrimer. Interacts with ATF5. Interacts with tubulin. Post-translationally, farnesylated. Farnesylation is required for membrane targeting. Unfarnesylated forms are shifted into the nucleus. As to expression, expressed in bone marrow, lymph nodes, T lymphocytes, spleen, thymus and tonsil. Overexpressed in tumor cell lines.

The protein localises to the cell membrane. Its subcellular location is the early endosome. It is found in the endoplasmic reticulum. It localises to the cytoplasm. The protein resides in the cytoskeleton. The protein localises to the spindle. Its subcellular location is the nucleus. The enzyme catalyses O-phospho-L-tyrosyl-[protein] + H2O = L-tyrosyl-[protein] + phosphate. Inhibited by sodium orthovanadate and pentamidine. Functionally, protein tyrosine phosphatase which stimulates progression from G1 into S phase during mitosis. May play a role in the development and maintenance of differentiating epithelial tissues. Enhances cell proliferation, cell motility and invasive activity, and promotes cancer metastasis. This is Protein tyrosine phosphatase type IVA 1 (PTP4A1) from Homo sapiens (Human).